Here is an 864-residue protein sequence, read N- to C-terminus: Leucine--tRNA ligase (864 aa).

Residues 57–67 (PYPSGNLHMGH) carry the 'HIGH' region motif. A 'KMSKS' region motif is present at residues 628 to 632 (KMSKS). Residue Lys631 participates in ATP binding.

It belongs to the class-I aminoacyl-tRNA synthetase family.

It localises to the cytoplasm. It carries out the reaction tRNA(Leu) + L-leucine + ATP = L-leucyl-tRNA(Leu) + AMP + diphosphate. The protein is Leucine--tRNA ligase of Prochlorococcus marinus (strain MIT 9515).